We begin with the raw amino-acid sequence, 416 residues long: Diaminopimelate decarboxylase (416 aa).

An N6-(pyridoxal phosphate)lysine modification is found at K60. Residues G240 and 274–277 (EPGR) each bind pyridoxal 5'-phosphate. The substrate site is built by R277, R313, and Y317. C343 serves as the catalytic Proton donor. Positions 344 and 371 each coordinate substrate. Y371 provides a ligand contact to pyridoxal 5'-phosphate.

It belongs to the Orn/Lys/Arg decarboxylase class-II family. LysA subfamily. As to quaternary structure, homodimer. The cofactor is pyridoxal 5'-phosphate.

It carries out the reaction meso-2,6-diaminopimelate + H(+) = L-lysine + CO2. It participates in amino-acid biosynthesis; L-lysine biosynthesis via DAP pathway; L-lysine from DL-2,6-diaminopimelate: step 1/1. Functionally, specifically catalyzes the decarboxylation of meso-diaminopimelate (meso-DAP) to L-lysine. This chain is Diaminopimelate decarboxylase, found in Pseudomonas fluorescens.